The sequence spans 572 residues: Methionine--tRNA ligase (572 aa).

The short motif at 11–21 is the 'HIGH' region element; sequence PYINGVKHLGN. The Zn(2+) site is built by Cys143, Cys146, Cys156, and Cys159. The short motif at 341–345 is the 'KMSKS' region element; the sequence is KFSTS. Thr344 lines the ATP pocket.

Belongs to the class-I aminoacyl-tRNA synthetase family. MetG type 1 subfamily. Monomer. The cofactor is Zn(2+).

Its subcellular location is the cytoplasm. The enzyme catalyses tRNA(Met) + L-methionine + ATP = L-methionyl-tRNA(Met) + AMP + diphosphate. Functionally, is required not only for elongation of protein synthesis but also for the initiation of all mRNA translation through initiator tRNA(fMet) aminoacylation. The protein is Methionine--tRNA ligase of Maricaulis maris (strain MCS10) (Caulobacter maris).